Consider the following 342-residue polypeptide: Oxygen-dependent coproporphyrinogen-III oxidase (342 aa).

Residue Ser98 coordinates substrate. 2 residues coordinate a divalent metal cation: His102 and His112. His112 (proton donor) is an active-site residue. Residue 114 to 116 (NYR) participates in substrate binding. 2 residues coordinate a divalent metal cation: His146 and His176. The tract at residues 266–301 (YVEFNLVWDRGTIFGLQTNGRTESILMSLPPLARWE) is important for dimerization.

It belongs to the aerobic coproporphyrinogen-III oxidase family. As to quaternary structure, homodimer. A divalent metal cation is required as a cofactor.

It is found in the cytoplasm. It catalyses the reaction coproporphyrinogen III + O2 + 2 H(+) = protoporphyrinogen IX + 2 CO2 + 2 H2O. It functions in the pathway porphyrin-containing compound metabolism; protoporphyrin-IX biosynthesis; protoporphyrinogen-IX from coproporphyrinogen-III (O2 route): step 1/1. Functionally, involved in the heme and chlorophyll biosynthesis. Catalyzes the aerobic oxidative decarboxylation of propionate groups of rings A and B of coproporphyrinogen-III to yield the vinyl groups in protoporphyrinogen-IX. This is Oxygen-dependent coproporphyrinogen-III oxidase from Prochlorococcus marinus (strain AS9601).